Reading from the N-terminus, the 185-residue chain is dCTP deaminase (185 aa).

DCTP is bound by residues 107 to 112 (KSTYAR), 131 to 133 (TLE), Gln152, Tyr166, and Gln176. Residue Glu133 is the Proton donor/acceptor of the active site.

It belongs to the dCTP deaminase family. Homotrimer.

It carries out the reaction dCTP + H2O + H(+) = dUTP + NH4(+). Its pathway is pyrimidine metabolism; dUMP biosynthesis; dUMP from dCTP (dUTP route): step 1/2. Its function is as follows. Catalyzes the deamination of dCTP to dUTP. In Anaplasma marginale (strain Florida), this protein is dCTP deaminase.